The chain runs to 123 residues: Large ribosomal subunit protein bL12 (123 aa).

It belongs to the bacterial ribosomal protein bL12 family. Homodimer. Part of the ribosomal stalk of the 50S ribosomal subunit. Forms a multimeric L10(L12)X complex, where L10 forms an elongated spine to which 2 to 4 L12 dimers bind in a sequential fashion. Binds GTP-bound translation factors.

Functionally, forms part of the ribosomal stalk which helps the ribosome interact with GTP-bound translation factors. Is thus essential for accurate translation. The sequence is that of Large ribosomal subunit protein bL12 from Rhodopseudomonas palustris (strain BisB5).